Here is a 250-residue protein sequence, read N- to C-terminus: Ubiquinone/menaquinone biosynthesis C-methyltransferase UbiE (250 aa).

S-adenosyl-L-methionine contacts are provided by residues Thr-73, Asp-94, 122–123 (NA), and Ser-139.

This sequence belongs to the class I-like SAM-binding methyltransferase superfamily. MenG/UbiE family.

The enzyme catalyses a 2-demethylmenaquinol + S-adenosyl-L-methionine = a menaquinol + S-adenosyl-L-homocysteine + H(+). The catalysed reaction is a 2-methoxy-6-(all-trans-polyprenyl)benzene-1,4-diol + S-adenosyl-L-methionine = a 5-methoxy-2-methyl-3-(all-trans-polyprenyl)benzene-1,4-diol + S-adenosyl-L-homocysteine + H(+). The protein operates within quinol/quinone metabolism; menaquinone biosynthesis; menaquinol from 1,4-dihydroxy-2-naphthoate: step 2/2. Its pathway is cofactor biosynthesis; ubiquinone biosynthesis. Functionally, methyltransferase required for the conversion of demethylmenaquinol (DMKH2) to menaquinol (MKH2) and the conversion of 2-polyprenyl-6-methoxy-1,4-benzoquinol (DDMQH2) to 2-polyprenyl-3-methyl-6-methoxy-1,4-benzoquinol (DMQH2). The chain is Ubiquinone/menaquinone biosynthesis C-methyltransferase UbiE from Francisella tularensis subsp. holarctica (strain FTNF002-00 / FTA).